A 320-amino-acid chain; its full sequence is Cytochrome f (320 aa).

An N-terminal signal peptide occupies residues 1–35 (MQTRNTFFWIKEQMTRSISVSIIVYVITQTSISNA). Heme-binding residues include Y36, C56, C59, and H60. The chain crosses the membrane as a helical span at residues 286-306 (VQGLLFFFASVILAQIFLVLK).

Belongs to the cytochrome f family. In terms of assembly, the 4 large subunits of the cytochrome b6-f complex are cytochrome b6, subunit IV (17 kDa polypeptide, petD), cytochrome f and the Rieske protein, while the 4 small subunits are PetG, PetL, PetM and PetN. The complex functions as a dimer. Requires heme as cofactor.

It is found in the plastid. Its subcellular location is the chloroplast thylakoid membrane. Its function is as follows. Component of the cytochrome b6-f complex, which mediates electron transfer between photosystem II (PSII) and photosystem I (PSI), cyclic electron flow around PSI, and state transitions. The sequence is that of Cytochrome f from Buxus microphylla (Littleleaf boxwood).